Reading from the N-terminus, the 574-residue chain is Laccase-12 (574 aa).

Positions 1 to 27 (MAAASSVLRCCLLVAALMTLSAMGAEA) are cleaved as a signal peptide. 2 Plastocyanin-like domains span residues 35 to 151 (DVQT…PPAG) and 161 to 314 (EEVP…YDDP). A glycan (N-linked (GlcNAc...) asparagine) is linked at asparagine 81. Cu cation contacts are provided by histidine 85, histidine 87, histidine 130, and histidine 132. Residues asparagine 173, asparagine 190, asparagine 206, asparagine 242, asparagine 302, asparagine 335, asparagine 342, asparagine 381, asparagine 388, asparagine 398, asparagine 434, asparagine 441, and asparagine 447 are each glycosylated (N-linked (GlcNAc...) asparagine). The 135-residue stretch at 424–558 (NFPYYPLNPF…KMAWLVLDGS (135 aa)) folds into the Plastocyanin-like 3 domain. Cu cation contacts are provided by histidine 475, histidine 478, histidine 480, histidine 537, cysteine 538, histidine 539, and histidine 543.

This sequence belongs to the multicopper oxidase family. It depends on Cu cation as a cofactor.

It is found in the secreted. It localises to the extracellular space. The protein localises to the apoplast. It carries out the reaction 4 hydroquinone + O2 = 4 benzosemiquinone + 2 H2O. In terms of biological role, lignin degradation and detoxification of lignin-derived products. The sequence is that of Laccase-12 (LAC12) from Oryza sativa subsp. japonica (Rice).